The following is a 1430-amino-acid chain: Nephrocystin-4 (1430 aa).

Residues 824-1430 (MRMGNVGRPP…ETFCVKVRYE (607 aa)) form a sufficient for basal bodies localization region. The tract at residues 828–857 (NVGRPPEKKLKRRETLPPSNSRIITMHDGR) is disordered.

This sequence belongs to the NPHP4 family.

The protein localises to the cytoplasm. The protein resides in the cytoskeleton. It is found in the cilium basal body. Its function is as follows. Involved in the organization of apical junctions. Required for building functional cilia. Involved in the organization of the subapical actin network in multiciliated epithelial cells. Seems to recruit int to basal bodies of motile cilia which subsequently interacts with actin-modifying proteins such as daam1. May down-regulate the canonical Wnt pathway and promote the Wnt-PCP pathway. Acts as a negative regulator of the hippo pathway. The polypeptide is Nephrocystin-4 (nphp4) (Xenopus laevis (African clawed frog)).